The following is a 267-amino-acid chain: Small ribosomal subunit protein eS4 (267 aa).

The S4 RNA-binding domain maps to 42 to 104 (LPLILVLRNR…TKENFRLLFD (63 aa)).

Belongs to the eukaryotic ribosomal protein eS4 family.

It is found in the cytoplasm. This Dictyostelium discoideum (Social amoeba) protein is Small ribosomal subunit protein eS4 (rps4).